Consider the following 193-residue polypeptide: Chromophore lyase CpcS/CpeS 4 (193 aa).

It belongs to the CpcS/CpeS biliprotein lyase family.

In terms of biological role, covalently attaches a chromophore to Cys residue(s) of phycobiliproteins. The protein is Chromophore lyase CpcS/CpeS 4 of Trichodesmium erythraeum (strain IMS101).